The sequence spans 391 residues: Squalene synthase 8 (391 aa).

The protein belongs to the phytoene/squalene synthase family. Mg(2+) is required as a cofactor. The cofactor is Mn(2+).

Its subcellular location is the endoplasmic reticulum. The catalysed reaction is 2 (2E,6E)-farnesyl diphosphate + NADH + H(+) = squalene + 2 diphosphate + NAD(+). The enzyme catalyses 2 (2E,6E)-farnesyl diphosphate + NADPH + H(+) = squalene + 2 diphosphate + NADP(+). The protein operates within terpene metabolism; lanosterol biosynthesis; lanosterol from farnesyl diphosphate: step 1/3. Component of the triterpene saponins (e.g. ginsenosides or panaxosides) and phytosterols biosynthetic pathways. Catalyzes the biosynthesis of squalene. This chain is Squalene synthase 8, found in Panax ginseng (Korean ginseng).